The following is a 239-amino-acid chain: Ribosomal RNA small subunit methyltransferase G (239 aa).

S-adenosyl-L-methionine-binding positions include Gly-77, Phe-82, 128-129, and Arg-147; that span reads AE. Residues 219-239 are disordered; the sequence is KNTPKKYPRKPGTPNKSPIEG.

This sequence belongs to the methyltransferase superfamily. RNA methyltransferase RsmG family.

The protein localises to the cytoplasm. In terms of biological role, specifically methylates the N7 position of guanine in position 535 of 16S rRNA. In Bacillus subtilis (strain 168), this protein is Ribosomal RNA small subunit methyltransferase G.